The sequence spans 320 residues: Phosphoribosylaminoimidazole-succinocarboxamide synthase (320 aa).

The tract at residues 283–303 (ESDWDRNSPPPPLPESIAHQT) is disordered.

It belongs to the SAICAR synthetase family.

The catalysed reaction is 5-amino-1-(5-phospho-D-ribosyl)imidazole-4-carboxylate + L-aspartate + ATP = (2S)-2-[5-amino-1-(5-phospho-beta-D-ribosyl)imidazole-4-carboxamido]succinate + ADP + phosphate + 2 H(+). The protein operates within purine metabolism; IMP biosynthesis via de novo pathway; 5-amino-1-(5-phospho-D-ribosyl)imidazole-4-carboxamide from 5-amino-1-(5-phospho-D-ribosyl)imidazole-4-carboxylate: step 1/2. In Rhodopirellula baltica (strain DSM 10527 / NCIMB 13988 / SH1), this protein is Phosphoribosylaminoimidazole-succinocarboxamide synthase.